The sequence spans 228 residues: L-ribulose-5-phosphate 4-epimerase UlaF (228 aa).

Substrate is bound by residues 26–27 (GN), 43–44 (SG), and 72–73 (SS). Zn(2+) is bound by residues D74, H93, and H95. D118 acts as the Proton donor/acceptor in catalysis. H167 provides a ligand contact to Zn(2+). Y225 (proton donor/acceptor) is an active-site residue.

This sequence belongs to the aldolase class II family. AraD/FucA subfamily. Requires Zn(2+) as cofactor.

It carries out the reaction L-ribulose 5-phosphate = D-xylulose 5-phosphate. It functions in the pathway cofactor degradation; L-ascorbate degradation; D-xylulose 5-phosphate from L-ascorbate: step 4/4. In terms of biological role, catalyzes the isomerization of L-ribulose 5-phosphate to D-xylulose 5-phosphate. Is involved in the anaerobic L-ascorbate utilization. The chain is L-ribulose-5-phosphate 4-epimerase UlaF from Escherichia coli O6:K15:H31 (strain 536 / UPEC).